Reading from the N-terminus, the 374-residue chain is Heme A synthase (374 aa).

A run of 8 helical transmembrane segments spans residues 22-42 (VAVW…IGAI), 107-127 (LWGR…WVRG), 135-155 (PTLA…WFMV), 172-192 (LHLG…LGLL), 209-229 (AWAA…VAGI), 265-285 (AAVQ…VLSL), 306-326 (AAAT…VVWI), and 327-347 (PLAT…VWTL). Position 271 (H271) interacts with heme. H332 provides a ligand contact to heme.

The protein belongs to the COX15/CtaA family. Type 2 subfamily. As to quaternary structure, interacts with CtaB. Heme b is required as a cofactor.

The protein resides in the cell membrane. The catalysed reaction is Fe(II)-heme o + 2 A + H2O = Fe(II)-heme a + 2 AH2. The protein operates within porphyrin-containing compound metabolism; heme A biosynthesis; heme A from heme O: step 1/1. Catalyzes the conversion of heme O to heme A by two successive hydroxylations of the methyl group at C8. The first hydroxylation forms heme I, the second hydroxylation results in an unstable dihydroxymethyl group, which spontaneously dehydrates, resulting in the formyl group of heme A. This is Heme A synthase from Rhodospirillum centenum (strain ATCC 51521 / SW).